Here is a 70-residue protein sequence, read N- to C-terminus: Small ribosomal subunit protein bS21 (70 aa).

This sequence belongs to the bacterial ribosomal protein bS21 family.

The protein is Small ribosomal subunit protein bS21 of Albidiferax ferrireducens (strain ATCC BAA-621 / DSM 15236 / T118) (Rhodoferax ferrireducens).